Consider the following 279-residue polypeptide: Arabinooligosaccharides transport system permease protein AraQ (279 aa).

A run of 6 helical transmembrane segments spans residues 8–28, 79–99, 110–130, 140–160, 184–204, and 245–265; these read ILSW…VFPL, VWIS…VGYA, FFFL…MLPL, VNTY…VFFF, GIFF…MAIL, and ILLA…IFFQ. In terms of domain architecture, ABC transmembrane type-1 spans 75-264; it reads FGNSVWISIV…VPIVILFIFF (190 aa).

Belongs to the binding-protein-dependent transport system permease family. MalFG subfamily. In terms of assembly, the complex is composed of two ATP-binding proteins (MsmX), two transmembrane proteins (AraP and AraQ) and a solute-binding protein (AraN).

Its subcellular location is the cell membrane. Its function is as follows. Part of the ABC transporter complex AraNPQ involved in the uptake of arabinooligosaccharides. Responsible for the translocation of the substrate across the membrane. In Halalkalibacterium halodurans (strain ATCC BAA-125 / DSM 18197 / FERM 7344 / JCM 9153 / C-125) (Bacillus halodurans), this protein is Arabinooligosaccharides transport system permease protein AraQ (araQ).